Here is a 422-residue protein sequence, read N- to C-terminus: N-acylglucosamine 2-epimerase (422 aa).

The leucine-zipper stretch occupies residues 185-206 (LLNLVEQLGEADEELAGISAEL).

The protein belongs to the N-acylglucosamine 2-epimerase family. Homodimer. Forms a heterodimer with renin and inhibits its activity.

It carries out the reaction an N-acyl-D-glucosamine = an N-acyl-D-mannosamine. Its pathway is amino-sugar metabolism; N-acetylneuraminate degradation. Catalyzes the interconversion of N-acetylglucosamine to N-acetylmannosamine. Involved in the N-glycolylneuraminic acid (Neu5Gc) degradation pathway. In Bos taurus (Bovine), this protein is N-acylglucosamine 2-epimerase (RENBP).